A 329-amino-acid polypeptide reads, in one-letter code: Trem-like transcript 2 protein (329 aa).

The N-terminal stretch at 1–24 (MEPWPLTFLLLLLLLLWLQGCVSG) is a signal peptide. An Ig-like V-type domain is found at 25–126 (HSNENLYRKV…HFYPLVGFQL (102 aa)). At 25–270 (HSNENLYRKV…NRSQETYIPA (246 aa)) the chain is on the extracellular side. 2 disulfide bridges follow: C46–C110 and C61–C68. The disordered stretch occupies residues 202-259 (FIDTSGTVTEPERNTESQPATLSPSNARSFSADPVTTSTMSRHQSSSLSTTGTCHPLT). A compositionally biased stretch (polar residues) spans 217-259 (ESQPATLSPSNARSFSADPVTTSTMSRHQSSSLSTTGTCHPLT). N261 carries N-linked (GlcNAc...) asparagine glycosylation. The chain crosses the membrane as a helical span at residues 271–291 (MVVVLTFLPAPVVLVVAYGFW). The Cytoplasmic portion of the chain corresponds to 292–329 (KKRHMGRYNLGSNYAKPWIHLPEGPETPWKPAWSKITQ).

Interacts with CD276 and this interaction enhances T-cell activation. Detected in B-lymphocytes and macrophages. Detected in spleen, lymph nodes, blood, bone marrow and cells from the peritoneal cavity (at protein level).

Its subcellular location is the cell membrane. Functionally, cell surface receptor that may play a role in the innate and adaptive immune response. Acts as a counter-receptor for CD276 and interaction with CD276 on T-cells enhances T-cell activation. This chain is Trem-like transcript 2 protein (Treml2), found in Mus musculus (Mouse).